A 391-amino-acid chain; its full sequence is Ribonucleoside-diphosphate reductase small chain (391 aa).

Fe cation contacts are provided by D135, E166, and H169. Residue Y173 is part of the active site. The Fe cation site is built by E229, E263, and H266.

The protein belongs to the ribonucleoside diphosphate reductase small chain family. Heterodimer of a large and a small subunit. It depends on Fe cation as a cofactor.

The protein resides in the nucleus. The protein localises to the cytoplasm. The enzyme catalyses a 2'-deoxyribonucleoside 5'-diphosphate + [thioredoxin]-disulfide + H2O = a ribonucleoside 5'-diphosphate + [thioredoxin]-dithiol. Functionally, provides the precursors necessary for DNA synthesis. Catalyzes the biosynthesis of deoxyribonucleotides from the corresponding ribonucleotides. The polypeptide is Ribonucleoside-diphosphate reductase small chain (suc22) (Schizosaccharomyces pombe (strain 972 / ATCC 24843) (Fission yeast)).